The following is a 46-amino-acid chain: Protein PsbN (46 aa).

Residues 10–30 (LIITILAVTIAFTAVSLYTAF) traverse the membrane as a helical segment.

Belongs to the PsbN family.

It is found in the cellular thylakoid membrane. In terms of biological role, may play a role in photosystem I and II biogenesis. The sequence is that of Protein PsbN from Acaryochloris marina (strain MBIC 11017).